We begin with the raw amino-acid sequence, 644 residues long: Transcription factor cep-1 (644 aa).

The DNA-binding element occupies 223–418 (EKWMEIDVLK…NFCEREDAKQ (196 aa)). Zn(2+) is bound by residues Cys307, His310, Cys361, and Cys365. The interval 528 to 555 (TNYSFRTLTLSTAEYTKVVEFLAREAKV) is required for tertiary structure stability of the protein.

This sequence belongs to the p53 family. In terms of assembly, homodimer. Interacts (via C-terminus domain) with prmt-5; not methylated by prmt-5. Interacts with cbp-1 (via HAT domain); cep-1 transcriptional activity may be inhibited by interaction with methylated cbp-1. Component of a complex that contains prmt-5 and cbp-1. Interacts with ape-1; the interaction inhibits pro-apoptotic activity of cep-1. Zn(2+) serves as cofactor. Post-translationally, phosphorylated in response to IR-induced DNA damage which is thought to be mediated by akt-1. Expressed in pharyngeal muscle and neurons.

It is found in the nucleus. Transcriptional activator that binds the same DNA consensus sequence as p53. Has a role in normal development to ensure proper meiotic chromosome segregation. Promotes apoptosis under conditions of cellular and genotoxic stress in response to DNA damage, hypoxia, or starvation. Regulates germline apoptosis in response to DNA damage. Its pro-apoptotic activity is inhibited when bound to ape-1 in vitro. Plays a role in cell cycle arrest in the germline in response to DNA damage by UV-C light. However, not required for survival in response to DNA damage induced by UV-C light, indicating that it is unlikely to be involved in DNA repair. Required for induction of ced-13 in response to DNA damage. Regulates DNA damage-induced apoptosis by inducing transcription of the programmed cell death activator egl-1. Regulates germline proliferation by activating phg-1. Modulates lifespan. The protein is Transcription factor cep-1 of Caenorhabditis elegans.